A 107-amino-acid polypeptide reads, in one-letter code: MEVQAVLGMILLFHPERCSKKPGEKVRKSEFQKEVLKKVYQATPYPTWENKIDIGILISLSPRAVDIWFQNKRHINKGKNQGVDEAVESRTIDLQTIMSIVESTLRY.

Residues 21-80 constitute a DNA-binding region (homeobox); it reads KPGEKVRKSEFQKEVLKKVYQATPYPTWENKIDIGILISLSPRAVDIWFQNKRHINKGKN.

It localises to the nucleus. The polypeptide is Homeobox protein HD-7 (HD-7) (Encephalitozoon cuniculi (strain GB-M1) (Microsporidian parasite)).